The chain runs to 559 residues: DDB1- and CUL4-associated factor 10 (559 aa).

The disordered stretch occupies residues 1-119 (MFPFGPHSPG…HGLGAGLGGP (119 aa)). A phosphoserine mark is found at Ser-53, Ser-63, Ser-89, and Ser-92. A compositionally biased stretch (low complexity) spans 56-86 (RPGAPSLSPAPRSGELGLPGAPESSTASAPG). Over residues 87-97 (EPSPPSPPCRR) the composition is skewed to pro residues. Position 134 is an omega-N-methylarginine (Arg-134). 4 WD repeats span residues 166–205 (RTHG…HIKT), 209–247 (AHED…TKVC), 251–290 (GHTS…EDGC), and 296–335 (FHTR…KSLE). At Ser-349 the chain carries Phosphoserine. Over residues 350 to 367 (SSDLTTSSSSSGPRVSGS) the composition is skewed to low complexity. Residues 350–396 (SSDLTTSSSSSGPRVSGSPCHHSDSNSSEKHMSRASQREGVSPRNSL) form a disordered region. The span at 370 to 381 (HHSDSNSSEKHM) shows a compositional bias: basic and acidic residues. 3 WD repeats span residues 408-448 (DHGN…QEGA), 470-508 (VGRG…SELV), and 526-559 (SHND…QPKF).

Belongs to the WD repeat DCAF10 family. In terms of assembly, interacts with DDB1.

Its pathway is protein modification; protein ubiquitination. May function as a substrate receptor for CUL4-DDB1 E3 ubiquitin-protein ligase complex. The sequence is that of DDB1- and CUL4-associated factor 10 (DCAF10) from Homo sapiens (Human).